Here is a 322-residue protein sequence, read N- to C-terminus: Sideroflexin fsf1 (322 aa).

4 helical membrane-spanning segments follow: residues 143–163, 175–195, 229–249, and 269–289; these read SYIYAVSASCGVAIGLNKIVP, VLGRLTPFAAVASAGVLNVFL, TALSRVINASPIMVIPPLVLM, and LGLITLTSLIALPLAIGVFPA.

Belongs to the sideroflexin family.

It is found in the mitochondrion membrane. Mitochondrial amino-acid transporter that mediates transport of serine into mitochondria. This chain is Sideroflexin fsf1, found in Schizosaccharomyces pombe (strain 972 / ATCC 24843) (Fission yeast).